A 366-amino-acid polypeptide reads, in one-letter code: Histidinol-phosphate aminotransferase 2 (366 aa).

Lys-226 carries the post-translational modification N6-(pyridoxal phosphate)lysine.

Belongs to the class-II pyridoxal-phosphate-dependent aminotransferase family. Histidinol-phosphate aminotransferase subfamily. As to quaternary structure, homodimer. The cofactor is pyridoxal 5'-phosphate.

It carries out the reaction L-histidinol phosphate + 2-oxoglutarate = 3-(imidazol-4-yl)-2-oxopropyl phosphate + L-glutamate. It functions in the pathway amino-acid biosynthesis; L-histidine biosynthesis; L-histidine from 5-phospho-alpha-D-ribose 1-diphosphate: step 7/9. The protein is Histidinol-phosphate aminotransferase 2 (hisC2) of Haemophilus influenzae (strain ATCC 51907 / DSM 11121 / KW20 / Rd).